The primary structure comprises 132 residues: Myelin P2 protein (132 aa).

Ser2 carries the post-translational modification N-acetylserine. (9Z)-octadecenoate contacts are provided by residues Arg107 and 127–129 (RIY). Hexadecanoate contacts are provided by residues Arg107 and 127-129 (RIY).

It belongs to the calycin superfamily. Fatty-acid binding protein (FABP) family. As to quaternary structure, monomer.

Its subcellular location is the cytoplasm. May play a role in lipid transport protein in Schwann cells. May bind cholesterol. The polypeptide is Myelin P2 protein (Pmp2) (Mus musculus (Mouse)).